The following is a 122-amino-acid chain: Small ribosomal subunit protein uS13 (122 aa).

The disordered stretch occupies residues 89 to 122 (GLRHRRGLPARGQRTKTNARTRKGPRRGVAGKRK).

The protein belongs to the universal ribosomal protein uS13 family. As to quaternary structure, part of the 30S ribosomal subunit. Forms a loose heterodimer with protein S19. Forms two bridges to the 50S subunit in the 70S ribosome.

Located at the top of the head of the 30S subunit, it contacts several helices of the 16S rRNA. In the 70S ribosome it contacts the 23S rRNA (bridge B1a) and protein L5 of the 50S subunit (bridge B1b), connecting the 2 subunits; these bridges are implicated in subunit movement. Contacts the tRNAs in the A and P-sites. The chain is Small ribosomal subunit protein uS13 from Oleidesulfovibrio alaskensis (strain ATCC BAA-1058 / DSM 17464 / G20) (Desulfovibrio alaskensis).